The sequence spans 260 residues: MKILVTNDDGPFSPGLAILREAVRGLGEATVVVPETPKSATGLGLTLHKPLRVNRLSLDGEPVYLVSGTPSDVIYIAMNVISGKPDLVVSGVNIGDNLSVQVILTSGTLGAVLQASIEGVPGIAFSAAVDTPEELEEGEYRNFVLRSTKAIVRAVVGEGFPKGVDALNVNFPSVIASDVVVVRPALKRFSTAVVRRKDPQGRPYYWLYGHPVEAEEGSDVHAVLEEGKIAITPLSLSGMLSYSPEALSGIVKKVKEELSR.

Asp8, Asp9, Ser39, and Asn93 together coordinate a divalent metal cation.

Belongs to the SurE nucleotidase family. Requires a divalent metal cation as cofactor.

The protein resides in the cytoplasm. It catalyses the reaction a ribonucleoside 5'-phosphate + H2O = a ribonucleoside + phosphate. Nucleotidase that shows phosphatase activity on nucleoside 5'-monophosphates. The polypeptide is 5'-nucleotidase SurE (Thermofilum pendens (strain DSM 2475 / Hrk 5)).